A 417-amino-acid polypeptide reads, in one-letter code: Gap junction alpha-3 protein (417 aa).

An intramembrane segment occupies 2–15 (GDWSFLGRLLENAQ). At 16 to 19 (EHST) the chain is on the cytoplasmic side. The chain crosses the membrane as a helical span at residues 20-40 (VIGKVWLTVLFIFRILVLGAA). Residues 41–71 (AEEVWGDEQSDFTCNTQQPGCENVCYDRAFP) are Extracellular-facing. 3 disulfide bridges follow: C54–C198, C61–C192, and C65–C187. A helical transmembrane segment spans residues 72–92 (ISHIRFWALQIIFVSTPTLIY). Residues 93–158 (LGHVLHIVRM…GALLRTYVFN (66 aa)) are Cytoplasmic-facing. Over residues 110–128 (EEELLRRDNPQHGRGREPM) the composition is skewed to basic and acidic residues. The interval 110–141 (EEELLRRDNPQHGRGREPMRTGSPRDPPLRDD) is disordered. Residues 159-179 (IIFKTLFEVGFIAGQYFLYGF) traverse the membrane as a helical segment. The Extracellular portion of the chain corresponds to 180–207 (QLQPLYRCDRWPCPNTVDCFISRPTEKT). A helical transmembrane segment spans residues 208–228 (IFVIFMLAVACASLVLNMLEI). At 229-417 (YHLGWKKLKQ…GRARPGDLAI (189 aa)) the chain is on the cytoplasmic side. 2 disordered regions span residues 247–267 (DASEARHKPLDPLPTATSSGP) and 334–417 (RQVA…DLAI). Residues 342 to 353 (PASKPSSAASSP) show a composition bias toward low complexity.

The protein belongs to the connexin family. Alpha-type (group II) subfamily. In terms of assembly, a hemichannel or connexon is composed of a hexamer of connexins. A functional gap junction is formed by the apposition of two hemichannels. Forms heteromeric channels with GJA8.

The protein resides in the cell membrane. It localises to the cell junction. Its subcellular location is the gap junction. Structural component of lens fiber gap junctions. Gap junctions are dodecameric channels that connect the cytoplasm of adjoining cells. They are formed by the docking of two hexameric hemichannels, one from each cell membrane. Small molecules and ions diffuse from one cell to a neighboring cell via the central pore. The sequence is that of Gap junction alpha-3 protein (Gja3) from Mus musculus (Mouse).